The chain runs to 952 residues: 2-oxoglutarate dehydrogenase E1 component (952 aa).

The protein belongs to the alpha-ketoglutarate dehydrogenase family. In terms of assembly, homodimer. Part of the 2-oxoglutarate dehydrogenase (OGDH) complex composed of E1 (2-oxoglutarate dehydrogenase), E2 (dihydrolipoamide succinyltransferase) and E3 (dihydrolipoamide dehydrogenase); the complex contains multiple copies of the three enzymatic components (E1, E2 and E3). Requires thiamine diphosphate as cofactor.

The catalysed reaction is N(6)-[(R)-lipoyl]-L-lysyl-[protein] + 2-oxoglutarate + H(+) = N(6)-[(R)-S(8)-succinyldihydrolipoyl]-L-lysyl-[protein] + CO2. Functionally, E1 component of the 2-oxoglutarate dehydrogenase (OGDH) complex which catalyzes the decarboxylation of 2-oxoglutarate, the first step in the conversion of 2-oxoglutarate to succinyl-CoA and CO(2). This Geobacillus sp. (strain WCH70) protein is 2-oxoglutarate dehydrogenase E1 component.